The following is a 474-amino-acid chain: Bifunctional protein HldE (474 aa).

Residues 1 to 318 (MKLSMPRFDQ…RAVQREQGSE (318 aa)) are ribokinase. Residue 194–197 (NLSE) participates in ATP binding. Residue aspartate 263 is part of the active site. Residues 343 to 474 (FTNGCFDILH…AIVEKIRQKG (132 aa)) are cytidylyltransferase.

The protein in the N-terminal section; belongs to the carbohydrate kinase PfkB family. In the C-terminal section; belongs to the cytidylyltransferase family. In terms of assembly, homodimer.

The enzyme catalyses D-glycero-beta-D-manno-heptose 7-phosphate + ATP = D-glycero-beta-D-manno-heptose 1,7-bisphosphate + ADP + H(+). It carries out the reaction D-glycero-beta-D-manno-heptose 1-phosphate + ATP + H(+) = ADP-D-glycero-beta-D-manno-heptose + diphosphate. It functions in the pathway nucleotide-sugar biosynthesis; ADP-L-glycero-beta-D-manno-heptose biosynthesis; ADP-L-glycero-beta-D-manno-heptose from D-glycero-beta-D-manno-heptose 7-phosphate: step 1/4. The protein operates within nucleotide-sugar biosynthesis; ADP-L-glycero-beta-D-manno-heptose biosynthesis; ADP-L-glycero-beta-D-manno-heptose from D-glycero-beta-D-manno-heptose 7-phosphate: step 3/4. Its function is as follows. Catalyzes the phosphorylation of D-glycero-D-manno-heptose 7-phosphate at the C-1 position to selectively form D-glycero-beta-D-manno-heptose-1,7-bisphosphate. Catalyzes the ADP transfer from ATP to D-glycero-beta-D-manno-heptose 1-phosphate, yielding ADP-D-glycero-beta-D-manno-heptose. The chain is Bifunctional protein HldE from Pseudomonas aeruginosa (strain UCBPP-PA14).